A 147-amino-acid polypeptide reads, in one-letter code: Large ribosomal subunit protein bL9 (147 aa).

Belongs to the bacterial ribosomal protein bL9 family.

Its function is as follows. Binds to the 23S rRNA. The chain is Large ribosomal subunit protein bL9 from Campylobacter jejuni subsp. jejuni serotype O:23/36 (strain 81-176).